Consider the following 429-residue polypeptide: Tyrosine-protein kinase STYK1 (429 aa).

The chain crosses the membrane as a helical span at residues 30–50; sequence VIIVPALLVGGFLILLAIILW. The tract at residues 58–83 is disordered; the sequence is SQRQSPGPRGTASVPASRGRSQEAAG. The Protein kinase domain occupies 119-390; it reads LEVLEQIHSG…GQLLQRLEAA (272 aa). Residues 125–133 and K152 each bind ATP; that span reads IHSGSCGTL. D256 functions as the Proton acceptor in the catalytic mechanism.

It belongs to the protein kinase superfamily. Tyr protein kinase family. As to expression, highly expressed in colon and small intestine. Weakly or not expressed in spleen, skeletal muscle, liver, kidney, heart and brain. Expressed in transformed kidney cell lines (COS-1 and HEK293T).

It is found in the membrane. The enzyme catalyses L-tyrosyl-[protein] + ATP = O-phospho-L-tyrosyl-[protein] + ADP + H(+). In terms of biological role, probable tyrosine protein-kinase, which has strong transforming capabilities on a variety of cell lines including NIH 3T3 fibroblasts and on athymic nude mice. When overexpressed, it can also induce tumor cell invasion as well as metastasis in distant organs. May act by activating both MAP kinase and phosphatidylinositol 3'-kinases (PI3K) pathways. This chain is Tyrosine-protein kinase STYK1 (Styk1), found in Mus musculus (Mouse).